A 193-amino-acid polypeptide reads, in one-letter code: Cysteine and glycine-rich protein 1 (193 aa).

Residues Cys-10–Cys-61 form the LIM zinc-binding 1 domain. The Nuclear localization signal signature appears at Lys-64 to Lys-69. The residue at position 81 (Ser-81) is a Phosphoserine. At Lys-84 the chain carries N6-acetyllysine. Lys-91 participates in a covalent cross-link: Glycyl lysine isopeptide (Lys-Gly) (interchain with G-Cter in SUMO2). An N6-acetyllysine mark is found at Lys-112, Lys-131, Lys-137, and Lys-161. Residues Cys-119–Cys-170 enclose the LIM zinc-binding 2 domain. Ser-192 bears the Phosphoserine mark.

Interacts with ASCC1; ASCC2 and TRIP4.

It localises to the nucleus. Its function is as follows. Could play a role in neuronal development. The polypeptide is Cysteine and glycine-rich protein 1 (CSRP1) (Pongo abelii (Sumatran orangutan)).